Here is a 122-residue protein sequence, read N- to C-terminus: Large ribosomal subunit protein uL18 (122 aa).

This sequence belongs to the universal ribosomal protein uL18 family. Part of the 50S ribosomal subunit; part of the 5S rRNA/L5/L18/L25 subcomplex. Contacts the 5S and 23S rRNAs.

This is one of the proteins that bind and probably mediate the attachment of the 5S RNA into the large ribosomal subunit, where it forms part of the central protuberance. In Thermotoga petrophila (strain ATCC BAA-488 / DSM 13995 / JCM 10881 / RKU-1), this protein is Large ribosomal subunit protein uL18.